The sequence spans 717 residues: UvrABC system protein C (717 aa).

The 80-residue stretch at 16-95 (DSPGVYKFRD…IKEFDPRFNV (80 aa)) folds into the GIY-YIG domain. Positions 208–243 (GTYIRRLEKDMMQAAEEMEYERAARLRDDAEALKRA) constitute a UVR domain. The interval 467-548 (ERTGEWEEAP…PREDDGRPKR (82 aa)) is disordered. Residues 477–522 (EAAPGSASVHASATGPAATGQATAGPAAMGQAAAGPVSTGPAATGP) show a composition bias toward low complexity.

It belongs to the UvrC family. Interacts with UvrB in an incision complex.

It is found in the cytoplasm. The UvrABC repair system catalyzes the recognition and processing of DNA lesions. UvrC both incises the 5' and 3' sides of the lesion. The N-terminal half is responsible for the 3' incision and the C-terminal half is responsible for the 5' incision. The sequence is that of UvrABC system protein C from Streptomyces griseus subsp. griseus (strain JCM 4626 / CBS 651.72 / NBRC 13350 / KCC S-0626 / ISP 5235).